The following is a 591-amino-acid chain: NADP-dependent malic enzyme (591 aa).

Residue tyrosine 139 is the Proton donor of the active site. Arginine 192 contacts NAD(+). Lysine 210 acts as the Proton acceptor in catalysis. 3 residues coordinate a divalent metal cation: glutamate 282, aspartate 283, and aspartate 306. Position 306 (aspartate 306) interacts with NAD(+). An NADP(+)-binding site is contributed by 335–351 (LFLGAGEAGTGIAELIA). NAD(+) is bound at residue asparagine 447.

Belongs to the malic enzymes family. Homotetramer. It depends on Mg(2+) as a cofactor. Mn(2+) is required as a cofactor.

The protein resides in the cytoplasm. It carries out the reaction (S)-malate + NADP(+) = pyruvate + CO2 + NADPH. It catalyses the reaction oxaloacetate + H(+) = pyruvate + CO2. This Vitis vinifera (Grape) protein is NADP-dependent malic enzyme.